Here is a 415-residue protein sequence, read N- to C-terminus: Multidrug resistance protein MdtA (415 aa).

Positions 1-21 (MKGSYKSRWVIVIVVVIAAIA) are cleaved as a signal peptide. Residues 31–47 (DSQSAAPGATKQAQQSP) are compositionally biased toward polar residues. 2 disordered regions span residues 31-60 (DSQS…GPLA) and 392-415 (EAQS…GARS). Residues 399–415 (PEEKATSREYAKKGARS) show a composition bias toward basic and acidic residues.

It belongs to the membrane fusion protein (MFP) (TC 8.A.1) family. As to quaternary structure, part of a tripartite efflux system composed of MdtA, MdtB and MdtC.

The protein localises to the cell inner membrane. Its function is as follows. The MdtABC tripartite complex confers resistance against novobiocin and deoxycholate. The protein is Multidrug resistance protein MdtA of Escherichia coli O157:H7.